The primary structure comprises 1189 residues: Intraflagellar transport protein 122 homolog (1189 aa).

WD repeat units lie at residues 16–54 (KLEQ…MIQP), 57–97 (GHKD…LKYT), 99–135 (NDSI…VSKH), 137–175 (VSSK…KVKI), 180–223 (GALS…VGKD), 225–264 (VLGF…LGPI), 266–306 (EQNS…HGLY), and 459–498 (KQAT…LLFQ).

As to quaternary structure, component of the IFT complex A (IFT-A) complex.

It localises to the cell projection. Its subcellular location is the cilium. The protein localises to the cytoplasm. It is found in the cytoskeleton. The protein resides in the cilium basal body. Functionally, required for cilia formation during embryonal development. Acts as a negative regulator of Shh signaling. This is Intraflagellar transport protein 122 homolog (ift122) from Xenopus tropicalis (Western clawed frog).